Reading from the N-terminus, the 716-residue chain is Protein C-mannosyl-transferase DPY19L3 (716 aa).

At 1 to 43 the chain is on the cytoplasmic side; it reads MMSIRQRREIRATEVSEDFPAQEENVKLENKLPSGCTSRRLWK. The chain crosses the membrane as a helical span at residues 44–64; the sequence is ILSLTIGGTIALCIGLLTSVY. Residues 65-154 lie on the Lumenal side of the membrane; it reads LATLHENDLW…RVLPIQKYLE (90 aa). N-linked (GlcNAc...) asparagine glycosylation is present at Asn-118. The helical transmembrane segment at 155–182 threads the bilayer; that stretch reads PVYFYIYTLFGLQAIYVTALYITSWLLS. The Cytoplasmic portion of the chain corresponds to 183–184; the sequence is GT. The segment at residues 185–197 is an intramembrane region (name=3); the sequence is WLSGLLAAFWYVT. At 198-215 the chain is on the cytoplasmic side; sequence NRIDTTRVEFTIPLRENW. Positions 216-230 form an intramembrane region, name=4; it reads ALPFFAIQIAAITYF. Over 231–239 the chain is Cytoplasmic; that stretch reads LRPNLQPLS. The helical transmembrane segment at 240-256 threads the bilayer; that stretch reads ERLTLLAIFISTFLFSL. Residues 257–262 lie on the Lumenal side of the membrane; the sequence is TWQFNQ. The helical transmembrane segment at 263–279 threads the bilayer; the sequence is FMMLMQALVLFTLDSLD. Over 280–289 the chain is Cytoplasmic; that stretch reads MLPAVKATWL. A helical transmembrane segment spans residues 290-306; sequence YGIQITSLLLVCILQFF. The Lumenal segment spans residues 307 to 308; that stretch reads NS. A helical transmembrane segment spans residues 309–323; the sequence is MILGSLLISFNLSVF. Residues 324 to 338 lie on the Cytoplasmic side of the membrane; that stretch reads IARKLQKNLKTGSFL. A helical membrane pass occupies residues 339–359; that stretch reads NRLGKLLLHLFMVLCLTLFLN. Over 360 to 414 the chain is Lumenal; the sequence is NIIKKILNLKSDEHIFKFLKAKFGLGATRDFDANLYLCEEAFGLLPFNTFGRLSD. A helical transmembrane segment spans residues 415–437; sequence TLLFYAYIFVLSITVIVAFVVAF. Over 438–465 the chain is Cytoplasmic; sequence HNLSDSTNQQSVGKMEKGTVDLKPETAY. The chain crosses the membrane as a helical span at residues 466-485; that stretch reads NLIHTILFGFLALSTMRMKY. The Lumenal segment spans residues 486–487; the sequence is LW. A helical membrane pass occupies residues 488-499; that stretch reads TSHMCVFASFGL. Residues 500 to 522 are Cytoplasmic-facing; that stretch reads CSPEIWELLLKSVHLYNPKRICI. Residues 523 to 539 form a helical membrane-spanning segment; the sequence is MRYSVPILILLYLCYKF. The Lumenal segment spans residues 540–716; that stretch reads WPGMMDELSE…FHVYKLSRNK (177 aa). The N-linked (GlcNAc...) asparagine glycan is linked to Asn-704.

This sequence belongs to the dpy-19 family. In terms of tissue distribution, widely expressed.

The protein localises to the endoplasmic reticulum membrane. It carries out the reaction L-tryptophyl-[protein] + a di-trans,poly-cis-dolichyl beta-D-mannosyl phosphate = C-alpha-D-mannosyl-L-tryptophyl-[protein] + a di-trans,poly-cis-dolichyl phosphate + H(+). The protein operates within protein modification; protein glycosylation. Its function is as follows. C-mannosyltransferase that mediates C-mannosylation of tryptophan residues on target proteins. The reaction occurs on the luminal side of the endoplasmic reticulum and involves the transfer of a mannose unit from a dolichylphosphate mannose (Dol-P-Man) donor to an acceptor protein containing a WxxW or WxxC consensus sequence. C-mannosylates RSPO1, a Wnt signaling regulator, preferentially at the first Trp residue in the sequence WxxW. C-mannosylates the netrin receptor UNC5A, preferentially at the third tryptophan of WxxWxxWxxC sequence. Has no C-mannosyltransferase activity. This chain is Protein C-mannosyl-transferase DPY19L3 (DPY19L3), found in Homo sapiens (Human).